The primary structure comprises 394 residues: Phloroisovalerophenone synthase (394 aa).

Residue Cys-166 is part of the active site.

This sequence belongs to the thiolase-like superfamily. Chalcone/stilbene synthases family. In terms of assembly, homodimer. Expressed in lupulin gland. Present at low levels in leaves but accumulates in cones.

The catalysed reaction is 3-methylbutanoyl-CoA + 3 malonyl-CoA + 3 H(+) = phlorisovalerophenone + 3 CO2 + 4 CoA. It carries out the reaction (E)-4-coumaroyl-CoA + 3 malonyl-CoA + 3 H(+) = 2',4,4',6'-tetrahydroxychalcone + 3 CO2 + 4 CoA. The enzyme catalyses 2-methylpropanoyl-CoA + 3 malonyl-CoA + 3 H(+) = phlorisobutanophenone + 3 CO2 + 4 CoA. It functions in the pathway secondary metabolite biosynthesis. In terms of biological role, involved in the biosynthesis of prenylated phenolics natural products which contribute to the bitter taste of beer and display broad biological activities. Polyketide synthase that can use 3-methylbutanoyl-CoA (isovaleryl-CoA) and 2-methylpropanoyl-CoA (isobutyryl-CoA) as substrates to produce phlorisovalerophenone (PIVP) and phlorisobutyrophenone (2-methyl-1-(2,4,6-trihydroxyphenyl)propan-1-one), respectively, intermediates in the biosynthesis of the bitter acids (alpha and beta) acids. Can also produce naringenin-chalcone (2',4,4',6'-tetrahydroxychalcone) from 4-coumaroyl-CoA with a lower efficiency. This chain is Phloroisovalerophenone synthase, found in Humulus lupulus (European hop).